A 188-amino-acid polypeptide reads, in one-letter code: PRA1 family protein 3 (188 aa).

N-acetylmethionine is present on Met1. Topologically, residues 1–35 are cytoplasmic; sequence MDVNLAPLRAWDDFFPGSDRFARPDFRDISKWNNR. 2 helical membrane-spanning segments follow: residues 36 to 56 and 57 to 77; these read VVSN…MMIS and VVGF…VLVF. The Cytoplasmic segment spans residues 78-92; sequence TGFVWAAHNKDILRR. Helical transmembrane passes span 93 to 113 and 115 to 135; these read MKKQ…YFLI and MFGG…LMFI. The segment at 103–117 is required for homodimer formation and heterodimer formation with ARL6IP1; it reads MVVMLASYFLISMFG. Residues 136–188 lie on the Cytoplasmic side of the membrane; sequence HASLRLRNLKNKLENKMEGIGLKKTPMGIILDALEQQEDSINKFADYISKARE. Positions 136 to 188 are targeting to endoplasmic reticulum membrane; it reads HASLRLRNLKNKLENKMEGIGLKKTPMGIILDALEQQEDSINKFADYISKARE.

It belongs to the PRA1 family. As to quaternary structure, homodimer. Heterodimer with ARL6IP1. Forms multimers. Interacts with ARL6. Interacts with prenylated RAB1A and RAB3A. Interacts with SLC1A1/EAAC1. Interacts with RTN2 (via first transmembrane domain). Does not interact with VAMP1, VAMP2 or VAMP3. Ubiquitous. Most abundant in heart and brain. In the embryonic brain cortex, expressed in neurons and astrocytes.

It localises to the endoplasmic reticulum membrane. Its subcellular location is the cell membrane. The protein resides in the cytoplasm. The protein localises to the cytoskeleton. In terms of biological role, regulates intracellular concentrations of taurine and glutamate. Negatively modulates SLC1A1/EAAC1 glutamate transport activity by decreasing its affinity for glutamate in a PKC activity-dependent manner. Plays a role in the retention of SLC1A1/EAAC1 in the endoplasmic reticulum. This is PRA1 family protein 3 (Arl6ip5) from Rattus norvegicus (Rat).